A 270-amino-acid chain; its full sequence is Putative phosphoenolpyruvate synthase regulatory protein (270 aa).

150 to 157 (GVSRCGKT) provides a ligand contact to ADP.

Belongs to the pyruvate, phosphate/water dikinase regulatory protein family. PSRP subfamily.

It catalyses the reaction [pyruvate, water dikinase] + ADP = [pyruvate, water dikinase]-phosphate + AMP + H(+). The catalysed reaction is [pyruvate, water dikinase]-phosphate + phosphate + H(+) = [pyruvate, water dikinase] + diphosphate. Functionally, bifunctional serine/threonine kinase and phosphorylase involved in the regulation of the phosphoenolpyruvate synthase (PEPS) by catalyzing its phosphorylation/dephosphorylation. The protein is Putative phosphoenolpyruvate synthase regulatory protein of Shewanella halifaxensis (strain HAW-EB4).